A 216-amino-acid chain; its full sequence is DNA-directed RNA polymerase subunit alpha (216 aa).

The protein belongs to the RNA polymerase alpha chain family. As to quaternary structure, in plastids the minimal PEP RNA polymerase catalytic core is composed of four subunits: alpha, beta, beta', and beta''. When a (nuclear-encoded) sigma factor is associated with the core the holoenzyme is formed, which can initiate transcription.

It localises to the plastid. The protein localises to the chloroplast. It catalyses the reaction RNA(n) + a ribonucleoside 5'-triphosphate = RNA(n+1) + diphosphate. DNA-dependent RNA polymerase catalyzes the transcription of DNA into RNA using the four ribonucleoside triphosphates as substrates. In Euglena gracilis, this protein is DNA-directed RNA polymerase subunit alpha (rpoA).